The primary structure comprises 200 residues: Recombination protein RecR (200 aa).

A C4-type zinc finger spans residues 59-74 (CDICGNVCESSPCPVC). The region spanning 82–177 (SVICVVEEPK…KVTRLASGLP (96 aa)) is the Toprim domain.

The protein belongs to the RecR family.

Its function is as follows. May play a role in DNA repair. It seems to be involved in an RecBC-independent recombinational process of DNA repair. It may act with RecF and RecO. This is Recombination protein RecR from Bifidobacterium longum (strain DJO10A).